Here is a 551-residue protein sequence, read N- to C-terminus: Arginine--tRNA ligase (551 aa).

Positions 123–133 (ANPTGPLTIGR) match the 'HIGH' region motif.

The protein belongs to the class-I aminoacyl-tRNA synthetase family. Monomer.

Its subcellular location is the cytoplasm. The catalysed reaction is tRNA(Arg) + L-arginine + ATP = L-arginyl-tRNA(Arg) + AMP + diphosphate. In Chlorobaculum parvum (strain DSM 263 / NCIMB 8327) (Chlorobium vibrioforme subsp. thiosulfatophilum), this protein is Arginine--tRNA ligase.